A 305-amino-acid polypeptide reads, in one-letter code: Tyrosine recombinase XerD (305 aa).

Residues 9-94 (MQDFGYVEQF…AIRRLFQYLH (86 aa)) enclose the Core-binding (CB) domain. Positions 115–299 (RLPKDISEEQ…ATERLKQIHS (185 aa)) constitute a Tyr recombinase domain. Catalysis depends on residues R155, K179, H251, R254, and H277. Y286 functions as the O-(3'-phospho-DNA)-tyrosine intermediate in the catalytic mechanism.

Belongs to the 'phage' integrase family. XerD subfamily. As to quaternary structure, forms a cyclic heterotetrameric complex composed of two molecules of XerC and two molecules of XerD.

Its subcellular location is the cytoplasm. Site-specific tyrosine recombinase, which acts by catalyzing the cutting and rejoining of the recombining DNA molecules. The XerC-XerD complex is essential to convert dimers of the bacterial chromosome into monomers to permit their segregation at cell division. It also contributes to the segregational stability of plasmids. The protein is Tyrosine recombinase XerD of Vibrio vulnificus (strain CMCP6).